Here is a 2188-residue protein sequence, read N- to C-terminus: Genome polyprotein (2188 aa).

Glycine 2 carries N-myristoyl glycine; by host lipidation. Topologically, residues 2-1503 (GAQVTRQQTG…HISRAFITLQ (1502 aa)) are cytoplasmic. N-acetylneuraminate contacts are provided by aspartate 408, arginine 412, proline 548, aspartate 549, isoleucine 550, arginine 834, proline 838, and asparagine 839. Active-site for protease 2A activity residues include histidine 879 and aspartate 897. Residues cysteine 914 and cysteine 916 each coordinate Zn(2+). Cysteine 968 serves as the catalytic For protease 2A activity. The Zn(2+) site is built by cysteine 974 and histidine 976. Residues 1108–1180 (SESWLKKFTE…EHSCPTTERQ (73 aa)) are membrane-binding. The segment at 1108 to 1246 (SESWLKKFTE…SPGTGKSVAS (139 aa)) is oligomerization. Residues 1129 to 1133 (SQKID) are RNA-binding. An SF3 helicase domain is found at 1212–1370 (EKKINNYIQF…YKDSNKLDMS (159 aa)). 1236–1243 (GSPGTGKS) is a binding site for ATP. Zn(2+) contacts are provided by cysteine 1376, cysteine 1389, and cysteine 1394. Residues 1376 to 1394 (CKPDNCTPTNYKRCCPLIC) form a C4-type; degenerate zinc finger. The interval 1421-1428 (EYRTRNST) is RNA-binding. Residues 1432–1437 (LEALFQ) are oligomerization. An intramembrane segment occupies 1504-1519 (AIATFVSIAGVVYVIY). The Cytoplasmic segment spans residues 1520 to 2188 (KLFAGIQGPY…SLRRKWLDSF (669 aa)). Tyrosine 1529 is subject to O-(5'-phospho-RNA)-tyrosine. The 179-residue stretch at 1549–1727 (GPGFDFAQAI…FAAMLLHSYF (179 aa)) folds into the Peptidase C3 domain. Catalysis depends on for protease 3C activity residues histidine 1588, glutamate 1619, and cysteine 1695. A RdRp catalytic domain is found at 1954–2069 (GEIFAFDYTG…SYPHKIDPGL (116 aa)). 2 residues coordinate Mg(2+): aspartate 1960 and aspartate 2055.

Belongs to the picornaviruses polyprotein family. In terms of assembly, interacts with capsid protein VP1 and capsid protein VP3 to form heterotrimeric protomers. As to quaternary structure, interacts with capsid protein VP0, and capsid protein VP3 to form heterotrimeric protomers. Five protomers subsequently associate to form pentamers which serve as building blocks for the capsid. Interacts with capsid protein VP2, capsid protein VP3 and capsid protein VP4 following cleavage of capsid protein VP0. Interacts with capsid protein VP1 and capsid protein VP3 in the mature capsid. In terms of assembly, interacts with capsid protein VP0 and capsid protein VP1 to form heterotrimeric protomers. Five protomers subsequently associate to form pentamers which serve as building blocks for the capsid. Interacts with capsid protein VP4 in the mature capsid. Interacts with protein 2C; this interaction may be important for virion morphogenesis. Interacts with host IRF7. As to quaternary structure, interacts with capsid protein VP1 and capsid protein VP3. Homodimer. In terms of assembly, homohexamer; forms a hexameric ring structure with 6-fold symmetry characteristic of AAA+ ATPases. Interacts (via N-terminus) with host RTN3 (via reticulon domain); this interaction is important for viral replication. Interacts with capsid protein VP3; this interaction may be important for virion morphogenesis. As to quaternary structure, interacts with protein 3CD. Homodimer. Interacts with host GBF1. Interacts (via GOLD domain) with host ACBD3 (via GOLD domain); this interaction allows the formation of a viral protein 3A/ACBD3 heterotetramer with a 2:2 stoichiometry, which will stimulate the recruitment of host PI4KB in order to synthesize PI4P at the viral RNA replication sites. In terms of assembly, interacts with RNA-directed RNA polymerase. As to quaternary structure, interacts with host IFIH1/MDA5; this interaction inhibits host IFIH1. Interacts with protein 3AB and with RNA-directed RNA polymerase. In terms of assembly, interacts with Viral protein genome-linked and with protein 3CD. Mg(2+) serves as cofactor. In terms of processing, specific enzymatic cleavages in vivo by the viral proteases yield processing intermediates and the mature proteins. Myristoylation is required for the formation of pentamers during virus assembly. Further assembly of 12 pentamers and a molecule of genomic RNA generates the provirion. Post-translationally, during virion maturation, immature virions are rendered infectious following cleavage of VP0 into VP4 and VP2. This maturation seems to be an autocatalytic event triggered by the presence of RNA in the capsid and it is followed by a conformational change infectious virion. In terms of processing, myristoylation is required during RNA encapsidation and formation of the mature virus particle. VPg is uridylylated by the polymerase into VPg-pUpU. This acts as a nucleotide-peptide primer for the genomic RNA replication.

The protein localises to the virion. It is found in the host cytoplasm. Its subcellular location is the host cytoplasmic vesicle membrane. It localises to the host nucleus. It catalyses the reaction a ribonucleoside 5'-triphosphate + H2O = a ribonucleoside 5'-diphosphate + phosphate + H(+). The catalysed reaction is Selective cleavage of Tyr-|-Gly bond in the picornavirus polyprotein.. It carries out the reaction RNA(n) + a ribonucleoside 5'-triphosphate = RNA(n+1) + diphosphate. The enzyme catalyses Selective cleavage of Gln-|-Gly bond in the poliovirus polyprotein. In other picornavirus reactions Glu may be substituted for Gln, and Ser or Thr for Gly.. In terms of biological role, component of immature procapsids, which is cleaved into capsid proteins VP4 and VP2 after maturation. Allows the capsid to remain inactive before the maturation step. Forms an icosahedral capsid of pseudo T=3 symmetry with capsid proteins VP2 and VP3. The capsid is 300 Angstroms in diameter, composed of 60 copies of each capsid protein and enclosing the viral positive strand RNA genome. Capsid protein VP1 mainly forms the vertices of the capsid. Capsid protein VP1, together with VP3, interacts with host cell sialic acids to provide virion attachment to target host cells. This attachment induces virion internalization. After binding to its receptor, the capsid undergoes conformational changes. Capsid protein VP1 N-terminus (that contains an amphipathic alpha-helix) and capsid protein VP4 are externalized. Together, they shape a pore in the host membrane through which viral genome is translocated to host cell cytoplasm. Functionally, forms an icosahedral capsid of pseudo T=3 symmetry with capsid proteins VP2 and VP3. The capsid is 300 Angstroms in diameter, composed of 60 copies of each capsid protein and enclosing the viral positive strand RNA genome. Its function is as follows. Forms an icosahedral capsid of pseudo T=3 symmetry with capsid proteins VP2 and VP3. The capsid is 300 Angstroms in diameter, composed of 60 copies of each capsid protein and enclosing the viral positive strand RNA genome. Capsid protein VP3, together with VP1, interacts with host cell sialic acids to provide virion attachment to target host cells. In addition, inhibits the phosphorylation and nuclear translocation of host IRF7 and thereby suppresses downstream interferon production. In terms of biological role, lies on the inner surface of the capsid shell. After binding to the host receptor, the capsid undergoes conformational changes. Capsid protein VP4 is released, Capsid protein VP1 N-terminus is externalized, and together, they shape a pore in the host membrane through which the viral genome is translocated into the host cell cytoplasm. Cysteine protease that cleaves viral polyprotein and specific host proteins. It is responsible for the autocatalytic cleavage between the P1 and P2 regions, which is the first cleavage occurring in the polyprotein. Also cleaves the host translation initiation factor EIF4G1, in order to shut down the capped cellular mRNA translation. Inhibits the host nucleus-cytoplasm protein and RNA trafficking by cleaving host members of the nuclear pores. Counteracts stress granule formation probably by antagonizing its assembly or promoting its dissassembly. Also plays a role in the suppression of host innate immunity through cleavage of host TRAF3, a component of the signaling cascade required to produce type I interferons. Functionally, plays an essential role in the virus replication cycle by acting as a viroporin. Creates a pore in the host endoplasmic reticulum and as a consequence releases Ca2+ in the cytoplasm of infected cell. In turn, high levels of cytoplasmic calcium may trigger membrane trafficking and transport of viral ER-associated proteins to viroplasms, sites of viral genome replication. Its function is as follows. Induces and associates with structural rearrangements of intracellular membranes. Displays RNA-binding, nucleotide binding and NTPase activities. May play a role in virion morphogenesis and viral RNA encapsidation by interacting with the capsid protein VP3. In terms of biological role, localizes the viral replication complex to the surface of membranous vesicles. Together with protein 3CD binds the Cis-Active RNA Element (CRE) which is involved in RNA synthesis initiation. Acts as a cofactor to stimulate the activity of 3D polymerase, maybe through a nucleid acid chaperone activity. Localizes the viral replication complex to the surface of membranous vesicles. It inhibits host cell endoplasmic reticulum-to-Golgi apparatus transport and causes the disassembly of the Golgi complex, possibly through GBF1 interaction. This would result in depletion of MHC, trail receptors and IFN receptors at the host cell surface. Plays an essential role in viral RNA replication by recruiting ACBD3 and PI4KB at the viral replication sites, thereby allowing the formation of the rearranged membranous structures where viral replication takes place. Functionally, acts as a primer for viral RNA replication and remains covalently bound to viral genomic RNA. VPg is uridylylated prior to priming replication into VPg-pUpU. The oriI viral genomic sequence may act as a template for this. The VPg-pUpU is then used as primer on the genomic RNA poly(A) by the RNA-dependent RNA polymerase to replicate the viral genome. During genome replication, the VPg-RNA linkage is removed by the host TDP2, thereby accelerating replication. During the late stage of the replication cycle, host TDP2 is excluded from sites of viral RNA synthesis and encapsidation, allowing for the generation of progeny virions. Its function is as follows. Involved in the viral replication complex and viral polypeptide maturation. It exhibits protease activity with a specificity and catalytic efficiency that is different from protease 3C. Protein 3CD lacks polymerase activity. Protein 3CD binds to the 5'UTR of the viral genome. In terms of biological role, major viral protease that mediates proteolytic processing of the polyprotein. Cleaves host EIF5B, contributing to host translation shutoff. Also cleaves host PABPC1, contributing to host translation shutoff. Binds and inhibits host IFIH1/MDA5, thereby inhibiting the type-I IFN production and the establishment of the antiviral state. Cleaves host MAP3K7/TAK1, resulting in inhibition of TRAF6-triggered NF-kappa-B induction. Cleaves host TICAM1; this interaction allows the virus to disrupt host TLR3 signaling. Cleaves host IRF7, resulting in inhibition of type-I IFN production. Cleaves host NLRP1, triggers host N-glycine-mediated degradation of the autoinhibitory NLRP1 N-terminal fragment. Replicates the viral genomic RNA on the surface of intracellular membranes. May form linear arrays of subunits that propagate along a strong head-to-tail interaction called interface-I. Covalently attaches UMP to a tyrosine of VPg, which is used to prime RNA synthesis. The positive stranded RNA genome is first replicated at virus induced membranous vesicles, creating a dsRNA genomic replication form. This dsRNA is then used as template to synthesize positive stranded RNA genomes. ss(+)RNA genomes are either translated, replicated or encapsidated. The chain is Genome polyprotein from Human enterovirus D68 (EV68).